A 285-amino-acid chain; its full sequence is 2-methoxy-6-polyprenyl-1,4-benzoquinol methylase, mitochondrial (285 aa).

The transit peptide at 1-30 directs the protein to the mitochondrion; that stretch reads MKGATNLFKSMRKPTNVGNFRQFSVNQVNS. S-adenosyl-L-methionine is bound by residues Thr-106, Asp-126, 156 to 157, and Ser-173; that span reads NA.

This sequence belongs to the class I-like SAM-binding methyltransferase superfamily. MenG/UbiE family. Component of a multi-subunit COQ enzyme complex.

Its subcellular location is the mitochondrion inner membrane. It catalyses the reaction a 2-methoxy-6-(all-trans-polyprenyl)benzene-1,4-diol + S-adenosyl-L-methionine = a 5-methoxy-2-methyl-3-(all-trans-polyprenyl)benzene-1,4-diol + S-adenosyl-L-homocysteine + H(+). The protein operates within cofactor biosynthesis; ubiquinone biosynthesis. In terms of biological role, methyltransferase required for the conversion of 2-polyprenyl-6-methoxy-1,4-benzoquinol (DDMQH2) to 2-polyprenyl-3-methyl-6-methoxy-1,4-benzoquinol (DMQH2). The polypeptide is 2-methoxy-6-polyprenyl-1,4-benzoquinol methylase, mitochondrial (Caenorhabditis elegans).